The primary structure comprises 94 residues: Phormicin (94 aa).

The N-terminal stretch at 1-23 (MKFFMVFVVTFCLAVCFVSQSLA) is a signal peptide. Residues 24–54 (IPADAANDAHFVDGVQALKEIEPELHGRYKR) constitute a propeptide that is removed on maturation. Cystine bridges form between Cys57–Cys84, Cys70–Cys90, and Cys74–Cys92.

This sequence belongs to the invertebrate defensin family. Type 1 subfamily.

The protein resides in the secreted. Responsible for the anti Gram-positive activity of immune hemolymph of P.terraenovae. In Protophormia terraenovae (Northern blowfly), this protein is Phormicin.